Reading from the N-terminus, the 478-residue chain is Lipoprotein lipase (478 aa).

The first 27 residues, 1 to 27, serve as a signal peptide directing secretion; sequence MESKALLLVALSVWLQSLIVSREGLAT. Positions 35 to 56 are interaction with GPIHBP1; that stretch reads RDFTDIESKFALRTPEDTVEDT. Cysteines 57 and 70 form a disulfide. N-linked (GlcNAc...) asparagine glycosylation is present at N73. At Y124 the chain carries 3'-nitrotyrosine. S162 functions as the Nucleophile in the catalytic mechanism. D186 serves as the catalytic Charge relay system. Position 194 is a 3'-nitrotyrosine (Y194). The Ca(2+) site is built by A197, R200, S202, and D205. A disulfide bridge links C246 with C269. The essential for determining substrate specificity stretch occupies residues 246–269; it reads CNIGEAIRVIAERGLGDVDQLVKC. Residue H271 is the Charge relay system of the active site. 2 disulfides stabilise this stretch: C294/C313 and C305/C308. The PLAT domain maps to 344 to 467; sequence FHYQVKMRFS…KGKSSVVFVK (124 aa). Y346 carries the post-translational modification 3'-nitrotyrosine. Residue N389 is glycosylated (N-linked (GlcNAc...) asparagine). The interval 420-424 is important for interaction with lipoprotein particles; the sequence is WSNWW. The interval 433-437 is important for heparin binding; sequence KIRVK. The segment at 446–470 is interaction with GPIHBP1; sequence IFCSREKKSHLQKGKSSVVFVKCHD. C448 and C468 are oxidised to a cystine.

The protein belongs to the AB hydrolase superfamily. Lipase family. As to quaternary structure, homodimer. Interacts with GPIHBP1 with 1:1 stoichiometry. Interacts with APOC2; the interaction activates LPL activity in the presence of lipids. Interaction with heparan sulfate proteoglycans is required to protect LPL against loss of activity. Associates with lipoprotein particles in blood plasma. Interacts with LMF1 and SEL1L; interaction with SEL1L is required to prevent aggregation of newly synthesized LPL in the endoplasmic reticulum (ER), and for normal export of LPL from the ER to the extracellular space. Interacts with SORL1; SORL1 acts as a sorting receptor, promoting LPL localization to endosomes and later to lysosomes, leading to degradation of newly synthesized LPL. Tyrosine nitration after lipopolysaccharide (LPS) challenge down-regulates the lipase activity.

The protein resides in the cell membrane. The protein localises to the secreted. It localises to the extracellular space. Its subcellular location is the extracellular matrix. It catalyses the reaction a triacylglycerol + H2O = a diacylglycerol + a fatty acid + H(+). It carries out the reaction a 1,2-diacyl-sn-glycero-3-phosphocholine + H2O = a 2-acyl-sn-glycero-3-phosphocholine + a fatty acid + H(+). The catalysed reaction is 1,2,3-tri-(9Z-octadecenoyl)-glycerol + H2O = di-(9Z)-octadecenoylglycerol + (9Z)-octadecenoate + H(+). The enzyme catalyses 1,2-di-(9Z-octadecenoyl)-sn-glycero-3-phosphocholine + H2O = (9Z-octadecenoyl)-sn-glycero-3-phosphocholine + (9Z)-octadecenoate + H(+). It catalyses the reaction 1,2,3-tributanoylglycerol + H2O = dibutanoylglycerol + butanoate + H(+). It carries out the reaction 1,2-dihexadecanoyl-sn-glycero-3-phosphocholine + H2O = hexadecanoyl-sn-glycero-3-phosphocholine + hexadecanoate + H(+). With respect to regulation, the apolipoprotein APOC2 acts as a coactivator of LPL activity. Ca(2+) binding promotes protein stability and formation of the active homodimer. Interaction with GPIHBP1 protects LPL against inactivation by ANGPTL4. Its function is as follows. Key enzyme in triglyceride metabolism. Catalyzes the hydrolysis of triglycerides from circulating chylomicrons and very low density lipoproteins (VLDL), and thereby plays an important role in lipid clearance from the blood stream, lipid utilization and storage. Although it has both phospholipase and triglyceride lipase activities it is primarily a triglyceride lipase with low but detectable phospholipase activity. Mediates margination of triglyceride-rich lipoprotein particles in capillaries. Recruited to its site of action on the luminal surface of vascular endothelium by binding to GPIHBP1 and cell surface heparan sulfate proteoglycans. The chain is Lipoprotein lipase (LPL) from Sus scrofa (Pig).